The chain runs to 812 residues: Collagen-like protein 5 (812 aa).

N-linked (GlcNAc...) asparagine; by host glycosylation is found at N13 and N83. 3 Collagen-like domains span residues 69-128 (GASG…KGDD), 143-502 (GEKG…KGDN), and 506-565 (GETG…KGEA). The disordered stretch occupies residues 71 to 568 (SGAQGVKGDP…PGIKGEAGTN (498 aa)). Composition is skewed to basic and acidic residues over residues 88-112 (TKGE…EKGD), 121-435 (SKGD…ETGS), 444-523 (SKGD…KGIK), and 531-561 (VKGD…DPGI). A glycan (N-linked (GlcNAc...) asparagine; by host) is linked at N502. 3 N-linked (GlcNAc...) asparagine; by host glycosylation sites follow: N637, N658, and N667. The segment at 730–802 (GQARTNGAST…VSASGGRGGD (73 aa)) is disordered. Residues 752–765 (FGGGGGGASGFAKG) are compositionally biased toward gly residues.

In terms of processing, may be hydroxylated on lysine by the viral-encoded procollagen-lysine,2-oxoglutarate 5-dioxygenase.

It localises to the virion. Its function is as follows. May participate in the formation of a layer of cross-linked glycosylated fibrils at the viral surface thus giving it a hairy-like appearance. The polypeptide is Collagen-like protein 5 (Acanthamoeba polyphaga (Amoeba)).